We begin with the raw amino-acid sequence, 422 residues long: G-protein coupled receptor 151 protein (422 aa).

The Extracellular portion of the chain corresponds to 1 to 45 (MGKAMLRAGFADTNSSNMNESFARLHFAGGYLPSDSKDWRTIIPS). N-linked (GlcNAc...) asparagine glycans are attached at residues Asn-14 and Asn-19. The chain crosses the membrane as a helical span at residues 46–66 (LLMAVCLVGLVGNLCVIGILL). Residues 67-76 (HGVWKRKPST) are Cytoplasmic-facing. The chain crosses the membrane as a helical span at residues 77-97 (IHSLILNLSLADFSLLLFSAP). Topologically, residues 98-123 (VRAAAYSKGVWDLGWFICKSSDWFTH) are extracellular. A disulfide bond links Cys-115 and Cys-191. The helical transmembrane segment at 124–144 (VCMAAKSLTFVVVAKACFAYA) threads the bilayer. Over 145 to 157 (SDPAKQESIHSRT) the chain is Cytoplasmic. The chain crosses the membrane as a helical span at residues 158 to 178 (IWSVLAGIWVVASLLPLPEWL). Topologically, residues 179-205 (FSTTRRHAGVEMCLVDVPAVAEEFMSM) are extracellular. The chain crosses the membrane as a helical span at residues 206-226 (FGKLYPLLVFCLPLLLAGVYF). The Cytoplasmic portion of the chain corresponds to 227–259 (WRAYDQCKTRCTKTRNLRDQMRSKQLTVMLLST). The chain crosses the membrane as a helical span at residues 260–280 (AIISALLWLPEWIAWLWVWHV). Over 281–290 (KAGGPMPPQG) the chain is Extracellular. The helical transmembrane segment at 291-311 (FIALSQVLMFFTSTANPLIFL) threads the bilayer. Residues 312 to 422 (VMSEEFKAGL…HEGQETEGCN (111 aa)) are Cytoplasmic-facing. The disordered stretch occupies residues 339–422 (VQEAPAGNTE…HEGQETEGCN (84 aa)). Residues 366-380 (TDGRGSPDDSKEKSG) show a composition bias toward basic and acidic residues.

In terms of tissue distribution, high expression in the brain and lower levels in kidney and liver. In the nervous system expressed specifically in the habenular area (at protein level).

The protein localises to the cell membrane. Its function is as follows. Proton-sensing G-protein coupled receptor. The chain is G-protein coupled receptor 151 protein (Gpr151) from Mus musculus (Mouse).